A 247-amino-acid polypeptide reads, in one-letter code: GTP cyclohydrolase 1 type 2 homolog (247 aa).

A divalent metal cation contacts are provided by His63, His64, Asp101, His215, and Glu219.

It belongs to the GTP cyclohydrolase I type 2/NIF3 family. As to quaternary structure, toroid-shaped homohexamer. In the hexamer, 3 dimers assemble to form a ring-like structure surrounding a central hole.

Provides significant protection from radiation damage and may be involved in the degradation of radiation-damaged nucleotides. This is GTP cyclohydrolase 1 type 2 homolog (ybgI) from Salmonella typhi.